Consider the following 451-residue polypeptide: Trigger factor (451 aa).

One can recognise a PPIase FKBP-type domain in the interval 173-258 (GDRVTLDFVG…LKKIEWAHLP (86 aa)).

This sequence belongs to the FKBP-type PPIase family. Tig subfamily.

It is found in the cytoplasm. The catalysed reaction is [protein]-peptidylproline (omega=180) = [protein]-peptidylproline (omega=0). Involved in protein export. Acts as a chaperone by maintaining the newly synthesized protein in an open conformation. Functions as a peptidyl-prolyl cis-trans isomerase. The sequence is that of Trigger factor from Cupriavidus necator (strain ATCC 17699 / DSM 428 / KCTC 22496 / NCIMB 10442 / H16 / Stanier 337) (Ralstonia eutropha).